The sequence spans 332 residues: NADH-quinone oxidoreductase subunit H (332 aa).

The next 9 helical transmembrane spans lie at 4–24 (FAFF…IFAS), 44–64 (IGPD…MIKL), 78–98 (FIFA…LAAI), 120–140 (VALL…FLGG), 165–185 (VGAL…LVDI), 194–214 (FSWL…ALFI), 255–275 (IAGA…FWII), 279–299 (IMMI…RAAF), and 312–332 (YLIL…AVLL).

Belongs to the complex I subunit 1 family. In terms of assembly, NDH-1 is composed of 14 different subunits. Subunits NuoA, H, J, K, L, M, N constitute the membrane sector of the complex.

It localises to the cell inner membrane. The catalysed reaction is a quinone + NADH + 5 H(+)(in) = a quinol + NAD(+) + 4 H(+)(out). In terms of biological role, NDH-1 shuttles electrons from NADH, via FMN and iron-sulfur (Fe-S) centers, to quinones in the respiratory chain. The immediate electron acceptor for the enzyme in this species is believed to be ubiquinone. Couples the redox reaction to proton translocation (for every two electrons transferred, four hydrogen ions are translocated across the cytoplasmic membrane), and thus conserves the redox energy in a proton gradient. This subunit may bind ubiquinone. This is NADH-quinone oxidoreductase subunit H from Campylobacter jejuni subsp. jejuni serotype O:6 (strain 81116 / NCTC 11828).